Here is a 345-residue protein sequence, read N- to C-terminus: NADPH-dependent oxidoreductase 2-alkenal reductase (345 aa).

NADP(+) contacts are provided by residues 52–53 (PY), 163–169 (AASGAVG), glycine 188, lysine 192, tyrosine 208, asparagine 232, cysteine 254, tyrosine 260, 284–286 (FVV), phenylalanine 330, and 334–336 (NVG). Tyrosine 53 lines the substrate pocket. Tyrosine 260 is a substrate binding site.

It belongs to the NADP-dependent oxidoreductase L4BD family. Homodimer. As to expression, expressed in leaves.

The protein resides in the cytoplasm. It localises to the nucleus. The protein localises to the nucleoplasm. The catalysed reaction is an n-alkanal + NAD(+) = an alk-2-enal + NADH + H(+). It carries out the reaction an n-alkanal + NADP(+) = an alk-2-enal + NADPH + H(+). Its activity is regulated as follows. Inhibited by N-ethylmaleimide and p-chloromercuribenzoic acid. Its function is as follows. Involved in the detoxification of reactive carbonyls. Acts on lipid peroxide-derived reactive aldehydes. Specific to a double bond activated by an adjacent carbonyl group. Can use both quinones and diamide as substrates, but not menadione, ferricyanide or phylloquinone. Can use 4-hydroxy-(2E)-nonenal (HNE), 4-hydroxy-(2E)-hexenal (HHE), (2E)-nonenal, (2E)-hexenal, (2E)-pentenal, propenal (acrolein), 3-buten-2-one and 3-penten-2-one, but not (R)-(-)-carvone, n-nonanal, n-hexanal, (3Z)-hexanal, cyclohex-2-en-1-one or 12-oxo phytodienoic acid (OPDA) as electron acceptors. Catalyzes the reduction of the alpha,beta-unsaturated bond of 2-alkenals, of lipid peroxide-derived oxenes 9-oxo-10(E),12(Z)-octadecadienoic acid (9-KODE) and 13-oxo-9(Z),11(E)-octadecadienoic acid (13-KODE), as well as 4-oxo-(2E)-nonenal and 4-hydroxynonenal. Can use 12-oxo-10(E) dodecanoate (traumatin), trans-1,3 diphenyl-2-propenone, trans-1,4-diphenyl-2-butene-1,4-dione, 9-oxo-12,13-epoxy-(10E)-octadecenoic acid (trans-EKODE-1b) and 9,13-dihydroxy-10-oxo-11-octadecenoic acid as substrates. Catalyzes the reduction of the 7-8 double bond of phenylpropanal substrates, such as p-coumaryl aldehyde and coniferyl aldehyde (in vitro). Has activity towards toxic substrates, such as 4-hydroxy-(2E)-nonenal (in vitro). May play a distinct role in plant antioxidant defense and is possibly involved in NAD(P)/NAD(P)H homeostasis. The polypeptide is NADPH-dependent oxidoreductase 2-alkenal reductase (Arabidopsis thaliana (Mouse-ear cress)).